A 427-amino-acid chain; its full sequence is G2/mitotic-specific cyclin-B1 (427 aa).

The disordered stretch occupies residues 33–126 (ATSKPGLRPR…DTPSPSPMET (94 aa)). N6-acetyllysine is present on Lys-73. Positions 100 to 110 (EPEHVKEDKLS) are enriched in basic and acidic residues. The residue at position 120 (Ser-120) is a Phosphoserine; by CDK1. Ser-122 is subject to Phosphoserine. Position 127 is a phosphoserine; by PLK1 (Ser-127). A Phosphoserine modification is found at Ser-141. 2 interaction with CDK2 regions span residues 163 to 171 (EYVKDIYAY) and 252 to 255 (YEEM). At Thr-315 the chain carries Phosphothreonine.

The protein belongs to the cyclin family. Cyclin AB subfamily. In terms of assembly, interacts with the CDC2 protein kinase to form a serine/threonine kinase holoenzyme complex also known as maturation promoting factor (MPF). The cyclin subunit imparts substrate specificity to the complex. Binds HEI10. Interacts with catalytically active RALBP1 and CDC2 during mitosis to form an endocytotic complex during interphase. Interacts with CCNF; interaction is required for nuclear localization. Interacts with CDK5RAP3. Interacts with RFPL4A and UBE2A. Interacts with INCA1. Ubiquitinated by the SCF(NIPA) complex during interphase, leading to its destruction. Deubiquitinated by USP22 during G2/M phase. In terms of processing, phosphorylated by PLK1 at Ser-127 on centrosomes during prophase: phosphorylation by PLK1 does not cause nuclear import. Phosphorylation at Ser-141 was also reported to be mediated by PLK1 but Ser-127 seems to be the primary phosphorylation site.

The protein localises to the cytoplasm. It is found in the nucleus. Its subcellular location is the cytoskeleton. It localises to the microtubule organizing center. The protein resides in the centrosome. Essential for the control of the cell cycle at the G2/M (mitosis) transition. This chain is G2/mitotic-specific cyclin-B1 (CCNB1), found in Bos taurus (Bovine).